Consider the following 177-residue polypeptide: Large ribosomal subunit protein uL6 (177 aa).

This sequence belongs to the universal ribosomal protein uL6 family. Part of the 50S ribosomal subunit.

Functionally, this protein binds to the 23S rRNA, and is important in its secondary structure. It is located near the subunit interface in the base of the L7/L12 stalk, and near the tRNA binding site of the peptidyltransferase center. The sequence is that of Large ribosomal subunit protein uL6 from Yersinia pseudotuberculosis serotype O:1b (strain IP 31758).